Reading from the N-terminus, the 499-residue chain is Bifunctional purine biosynthesis protein PurH (499 aa).

The region spanning 1–144 (MIKRALISVF…KNFKDVVVLT (144 aa)) is the MGS-like domain.

This sequence belongs to the PurH family.

The enzyme catalyses (6R)-10-formyltetrahydrofolate + 5-amino-1-(5-phospho-beta-D-ribosyl)imidazole-4-carboxamide = 5-formamido-1-(5-phospho-D-ribosyl)imidazole-4-carboxamide + (6S)-5,6,7,8-tetrahydrofolate. It carries out the reaction IMP + H2O = 5-formamido-1-(5-phospho-D-ribosyl)imidazole-4-carboxamide. Its pathway is purine metabolism; IMP biosynthesis via de novo pathway; 5-formamido-1-(5-phospho-D-ribosyl)imidazole-4-carboxamide from 5-amino-1-(5-phospho-D-ribosyl)imidazole-4-carboxamide (10-formyl THF route): step 1/1. It functions in the pathway purine metabolism; IMP biosynthesis via de novo pathway; IMP from 5-formamido-1-(5-phospho-D-ribosyl)imidazole-4-carboxamide: step 1/1. The sequence is that of Bifunctional purine biosynthesis protein PurH from Clostridium botulinum (strain Okra / Type B1).